The primary structure comprises 152 residues: NADH-quinone oxidoreductase subunit I 1 (152 aa).

4Fe-4S ferredoxin-type domains are found at residues 53 to 83 (MKLGENGETLCIGCNLCALACPENLIAMKSD) and 94 to 123 (VTYVYDVSRCMFCGLCEEACPTQSLKLGTG). Cysteine 63, cysteine 66, cysteine 69, cysteine 73, cysteine 103, cysteine 106, cysteine 109, and cysteine 113 together coordinate [4Fe-4S] cluster.

It belongs to the complex I 23 kDa subunit family. As to quaternary structure, NDH-1 is composed of 14 different subunits. Subunits NuoA, H, J, K, L, M, N constitute the membrane sector of the complex. [4Fe-4S] cluster serves as cofactor.

It localises to the cell inner membrane. The enzyme catalyses a quinone + NADH + 5 H(+)(in) = a quinol + NAD(+) + 4 H(+)(out). Functionally, NDH-1 shuttles electrons from NADH, via FMN and iron-sulfur (Fe-S) centers, to quinones in the respiratory chain. The immediate electron acceptor for the enzyme in this species is believed to be ubiquinone. Couples the redox reaction to proton translocation (for every two electrons transferred, four hydrogen ions are translocated across the cytoplasmic membrane), and thus conserves the redox energy in a proton gradient. The protein is NADH-quinone oxidoreductase subunit I 1 of Koribacter versatilis (strain Ellin345).